The primary structure comprises 496 residues: Solute carrier family 2, facilitated glucose transporter member 3 (496 aa).

Residues 1–10 (MGTQKVTPAL) lie on the Cytoplasmic side of the membrane. Residues 11 to 32 (IFAITVATIGSFQFGYNTGVIN) form a helical membrane-spanning segment. Over 33-64 (APEKIIKEFINKTLTDKGNAPPSEVLLTSLWS) the chain is Extracellular. Asn43 carries an N-linked (GlcNAc...) asparagine glycan. A helical transmembrane segment spans residues 65 to 85 (LSVAIFSVGGMIGSFSVGLFV). The Cytoplasmic segment spans residues 86-90 (NRFGR). Residues 91 to 111 (RNSMLIVNLLAVTGGCFMGLC) form a helical membrane-spanning segment. Residues 112-118 (KVAKSVE) are Extracellular-facing. A helical transmembrane segment spans residues 119–142 (MLILGRLIIGLFCGLCTGFVPMYI). Over 143 to 153 (GEISPTALRGA) the chain is Cytoplasmic. The helical transmembrane segment at 154–174 (FGTLNQLGIVVGILVAQIFGL) threads the bilayer. Gln159 provides a ligand contact to D-glucose. The Extracellular portion of the chain corresponds to 175–183 (EFILGSEEL). Residues 184–204 (WPLLLGFTILPTILQSAALPF) traverse the membrane as a helical segment. Residues 205 to 269 (CPESPRFLLI…LFRVSSYRQP (65 aa)) are Cytoplasmic-facing. Phosphothreonine is present on Thr232. Residues 270-290 (IIISIVLQLSQQLSGINAVFY) traverse the membrane as a helical segment. Positions 277-279 (QLS) are important for selectivity against fructose. Residues 280–281 (QQ) and Asn286 contribute to the D-glucose site. The Extracellular portion of the chain corresponds to 291–304 (YSTGIFKDAGVQEP). A helical transmembrane segment spans residues 305 to 325 (IYATIGAGVVNTIFTVVSLFL). D-glucose is bound at residue Asn315. Topologically, residues 326–331 (VERAGR) are cytoplasmic. The helical transmembrane segment at 332–352 (RTLHMIGLGGMAFCSTLMTVS) threads the bilayer. The Extracellular segment spans residues 353-363 (LLLKDNYNGMS). Residues 364-389 (FVCIGAILVFVAFFEIGPGPIPWFIV) traverse the membrane as a helical segment. D-glucose is bound by residues Glu378 and Trp386. Residues 390-399 (AELFSQGPRP) lie on the Cytoplasmic side of the membrane. A helical transmembrane segment spans residues 400–420 (AAMAVAGCSNWTSNFLVGLLF). Residues 421 to 429 (PSAAHYLGA) lie on the Extracellular side of the membrane. A helical transmembrane segment spans residues 430–450 (YVFIIFTGFLITFLAFTFFKV). Residues 451–496 (PETRGRTFEDITRAFEGQAHGADRSGKDGVMEVNSIEPAKETTTNV) are Cytoplasmic-facing. Ser475 and Ser485 each carry phosphoserine. Thr492 carries the phosphothreonine modification.

Belongs to the major facilitator superfamily. Sugar transporter (TC 2.A.1.1) family. Glucose transporter subfamily. Interacts with SMIM43; the interaction may promote SLC2A3-mediated glucose transport to meet the energy needs of mesendoderm differentiation.

The protein resides in the cell membrane. It localises to the perikaryon. It is found in the cell projection. It carries out the reaction D-glucose(out) = D-glucose(in). It catalyses the reaction D-galactose(in) = D-galactose(out). Its activity is regulated as follows. Deoxyglucose transport is inhibited by D-glucose, D-galactose and maltose. Galactose transport is inhibited by D-glucose and maltose. Facilitative glucose transporter. Can also mediate the uptake of various other monosaccharides across the cell membrane. Mediates the uptake of glucose, 2-deoxyglucose, galactose, mannose, xylose and fucose, and probably also dehydroascorbate. Does not mediate fructose transport. Required for mesendoderm differentiation. In Pongo abelii (Sumatran orangutan), this protein is Solute carrier family 2, facilitated glucose transporter member 3.